The chain runs to 553 residues: ATP synthase F(1) complex subunit alpha, mitochondrial (553 aa).

The transit peptide at 1–43 (MLSVRVAAAVVRALPRRAGLVSRNALGSSFIAARNFHASNTHL) directs the protein to the mitochondrion. 2 positions are modified to phosphoserine: Ser53 and Ser65. Ser76 bears the Phosphoserine; alternate mark. A glycan (O-linked (GlcNAc) serine; alternate) is linked at Ser76. The residue at position 106 (Ser106) is a Phosphoserine. N6-acetyllysine occurs at positions 123, 126, and 132. The residue at position 134 (Thr134) is a Phosphothreonine. Position 161 is an N6-acetyllysine; alternate (Lys161). Lys161 carries the N6-succinyllysine; alternate modification. A Phosphoserine modification is found at Ser166. Residue Lys167 is modified to N6-acetyllysine; alternate. An N6-succinyllysine; alternate modification is found at Lys167. Ser184 is modified (phosphoserine). Arg204 carries the omega-N-methylarginine modification. ATP is bound by residues Gln215, Gly217, Lys218, Thr219, and Ser220. Residue Thr219 coordinates Mg(2+). Lys230 and Lys239 each carry N6-acetyllysine; alternate. Lys230 and Lys239 each carry N6-succinyllysine; alternate. Lys240 carries the N6-acetyllysine modification. Lys261 and Lys305 each carry N6-acetyllysine; alternate. N6-succinyllysine; alternate is present on residues Lys261 and Lys305. Asp312 lines the Mg(2+) pocket. Lys427 bears the N6-acetyllysine; alternate mark. An N6-succinyllysine; alternate modification is found at Lys427. Residue Lys434 is modified to N6-acetyllysine. The ATP site is built by Gln473 and Gln475. N6-acetyllysine; alternate is present on residues Lys498, Lys506, Lys531, and Lys539. N6-succinyllysine; alternate occurs at positions 498, 506, 531, and 539. Position 541 is an N6-acetyllysine (Lys541).

The protein belongs to the ATPase alpha/beta chains family. Homotrimer. Component of the ATP synthase complex composed at least of ATP5F1A/subunit alpha, ATP5F1B/subunit beta, ATP5MC1/subunit c (homooctomer), MT-ATP6/subunit a, MT-ATP8/subunit 8, ATP5ME/subunit e, ATP5MF/subunit f, ATP5MG/subunit g, ATP5MK/subunit k, ATP5MJ/subunit j, ATP5F1C/subunit gamma, ATP5F1D/subunit delta, ATP5F1E/subunit epsilon, ATP5PF/subunit F6, ATP5PB/subunit b, ATP5PD/subunit d, ATP5PO/subunit OSCP. ATP synthase complex consists of a soluble F(1) head domain (subunits alpha(3) and beta(3)) - the catalytic core - and a membrane F(0) domain - the membrane proton channel (subunits c, a, 8, e, f, g, k and j). These two domains are linked by a central stalk (subunits gamma, delta, and epsilon) rotating inside the F1 region and a stationary peripheral stalk (subunits F6, b, d, and OSCP). Interacts with ATPAF2. Interacts with HRG; the interaction occurs on the surface of T-cells and alters the cell morphology when associated with concanavalin (in vitro). Interacts with PLG (angiostatin peptide); the interaction inhibits most of the angiogenic properties of angiostatin. Interacts with BLOC1S1. Interacts with BCL2L1 isoform BCL-X(L); the interaction mediates the association of BCL2L1 isoform BCL-X(L) with the mitochondrial membrane F(1)F(0) ATP synthase and enhances neurons metabolic efficiency. Interacts with CLN5 and PPT1. Interacts with S100A1; this interaction increases F1-ATPase activity. Interacts with ABCB7; this interaction allows the regulation of cellular iron homeostasis and cellular reactive oxygen species (ROS) levels in cardiomyocytes. In terms of processing, acetylated on lysine residues. BLOC1S1 is required for acetylation.

It is found in the mitochondrion inner membrane. Its subcellular location is the cell membrane. Functionally, subunit alpha, of the mitochondrial membrane ATP synthase complex (F(1)F(0) ATP synthase or Complex V) that produces ATP from ADP in the presence of a proton gradient across the membrane which is generated by electron transport complexes of the respiratory chain. ATP synthase complex consist of a soluble F(1) head domain - the catalytic core - and a membrane F(1) domain - the membrane proton channel. These two domains are linked by a central stalk rotating inside the F(1) region and a stationary peripheral stalk. During catalysis, ATP synthesis in the catalytic domain of F(1) is coupled via a rotary mechanism of the central stalk subunits to proton translocation. In vivo, can only synthesize ATP although its ATP hydrolase activity can be activated artificially in vitro. With the catalytic subunit beta (ATP5F1B), forms the catalytic core in the F(1) domain. Subunit alpha does not bear the catalytic high-affinity ATP-binding sites. The protein is ATP synthase F(1) complex subunit alpha, mitochondrial of Pan troglodytes (Chimpanzee).